A 162-amino-acid polypeptide reads, in one-letter code: Small ribosomal subunit protein bS16 (162 aa).

The tract at residues 113-162 is disordered; that stretch reads ADGGPTTEATKPKKKSPAKKAAKAAEPAPQPEQPDTPALGGEQAELTAES. A compositionally biased stretch (basic residues) spans 124 to 134; sequence PKKKSPAKKAA.

Belongs to the bacterial ribosomal protein bS16 family.

This Mycobacterium tuberculosis (strain ATCC 25177 / H37Ra) protein is Small ribosomal subunit protein bS16.